The primary structure comprises 340 residues: DNA repair protein RAD51 homolog A (340 aa).

Residues 1–14 (MSSAAQQQQKAAAA) show a composition bias toward low complexity. Residues 1-21 (MSSAAQQQQKAAAAEQEEVEH) are disordered. The region spanning 49-78 (TVEAVAYTPRKDLLQIKGISEAKADKIIEA) is the HhH domain. ATP is bound at residue 128–135 (GEFRSGKT).

Belongs to the RecA family. RAD51 subfamily. Self-associates and may interact with XRCC3 homolog. In terms of tissue distribution, highly expressed in mitotic and meiotic tissues, but low levels in differentiated tissues.

The protein resides in the nucleus. In terms of biological role, binds to single and double-stranded DNA and exhibits DNA-dependent ATPase activity. Unwinds duplex DNA. Component of the meiotic recombination pathway. Seems to play a role in mediating chromosome homology search, chromosome pairing and synapsis at early stages and probably chromosome crossing-over at later stages in meiosis. Probably is involved in the repair of meiotic double strand breaks (DBSs) and in homologous recombination. The polypeptide is DNA repair protein RAD51 homolog A (RAD51A) (Zea mays (Maize)).